The following is a 1883-amino-acid chain: Transmembrane protein 131 (1883 aa).

A signal peptide spans 1-22; sequence MGKRAGGGATGATTAAVSTSAG. The Lumenal portion of the chain corresponds to 23–1117; it reads AGLEPAAARS…AEALPRPNWE (1095 aa). The tract at residues 109–283 is papD-L domain; that stretch reads RFEPPMLDFH…ETKGVMRASF (175 aa). Asn300 carries N-linked (GlcNAc...) asparagine glycosylation. Ser803 is modified (phosphoserine). A helical membrane pass occupies residues 1118-1138; that stretch reads LALYIIISGIMSALFLLVIGT. The Cytoplasmic segment spans residues 1139-1883; that stretch reads AYLEAQGIWE…WSNSHFPHEN (745 aa). 5 disordered regions span residues 1198–1580, 1593–1656, 1670–1712, 1766–1789, and 1832–1858; these read GAGG…DSLY, LKQR…KNGN, PGGN…PVSN, WESP…HTAT, and MGTE…TYNP. The segment covering 1237–1261 has biased composition (low complexity); it reads AKNSSSTSSRTSAQAASSQSANKTS. The segment covering 1302 to 1316 has biased composition (pro residues); the sequence is PQPPLPPPVPQPQEP. Ser1322 and Ser1342 each carry phosphoserine. Basic and acidic residues-rich tracts occupy residues 1330-1343 and 1353-1364; these read SHPE…HSSE and AMDKDFDHHDSP. Ser1375 is subject to Phosphoserine. Residues 1380–1394 are compositionally biased toward basic residues; that stretch reads SKGKGKPLQRKVKPP. Basic and acidic residues predominate over residues 1395-1417; sequence KKQEEKEKKGKGKPQEDELKDSL. The segment covering 1423-1434 has biased composition (low complexity); sequence SSTTTETSNPDT. The segment covering 1436–1458 has biased composition (basic and acidic residues); it reads PLLKEDTEKQKGKQAMPEKHESE. 2 stretches are compositionally biased toward polar residues: residues 1510 to 1526 and 1542 to 1553; these read AMTS…TKGT and PNSQELGNTSSS. The segment covering 1602–1611 has biased composition (pro residues); sequence PASPSPPAAP. Residues 1619–1630 show a composition bias toward low complexity; sequence SYSSIVNSSSSS. Over residues 1678 to 1690 the composition is skewed to polar residues; it reads VSSNKTGFSSSLG. Low complexity-rich tracts occupy residues 1773–1784 and 1837–1849; these read PSPSWPASSGSP and SPAP…SSPA. Phosphoserine occurs at positions 1863 and 1871.

The protein belongs to the TMEM131 family. Interacts (via PapD-L domain) with COL1A2 (via C-terminus); the interaction is direct, may occur with other collagen proteins, and is involved in assembly and TRAPPIII ER-to-Golgi transport complex-dependent secretion of collagen. Interacts (via C-terminus) with TRAPPC8 (via C-terminus); the interaction is direct.

The protein resides in the membrane. Collagen binding transmembrane protein involved in collagen secretion by recruiting the ER-to-Golgi transport complex TRAPPIII. May play a role in the immune response to viral infection. The protein is Transmembrane protein 131 of Homo sapiens (Human).